Reading from the N-terminus, the 726-residue chain is X-ray repair cross-complementing protein 5 (726 aa).

A VWFA domain is found at 8 to 160; sequence AVVLCMDVGL…ANLKKAEITL (153 aa). Residues 137 to 164 form a leucine-zipper region; sequence LSSPFSVDQLEVIIANLKKAEITLQFFL. The span at 175–186 shows a compositional bias: low complexity; that stretch reads GSSNNRGNAGSS. Residues 175–198 form a disordered region; that stretch reads GSSNNRGNAGSSDRGCGPGKGLSD. The region spanning 253–449 is the Ku domain; sequence GSSLSIRIVG…NKKFTPTESQ (197 aa). The EEXXXDL motif motif lies at 714 to 722; the sequence is EDEGDVDDL.

Belongs to the ku80 family. As to quaternary structure, heterodimer composed of xrcc5/Ku80 and xrcc6/Ku70. Post-translationally, ubiquitinated via 'Lys-48'-linked polyubiquitination at DNA double strand break sites (DSBs), leading to its release from DSBs and subsequent proteasomal degradation. Polyubiquitination is not required for completion of NHEJ. As to expression, expressed at high levels in oocyte and testis.

Its subcellular location is the nucleus. Its function is as follows. Single-stranded DNA-dependent ATP-dependent helicase that plays a key role in DNA non-homologous end joining (NHEJ). This Xenopus laevis (African clawed frog) protein is X-ray repair cross-complementing protein 5.